The primary structure comprises 110 residues: Protein YcgL (110 aa).

Positions 14–98 constitute a YcgL domain; it reads MFCVIYRSSK…PPEDLLKQHL (85 aa). Positions 87–110 are disordered; that stretch reads PPPPEDLLKQHLSSVGQNTSPADR. Over residues 97–110 the composition is skewed to polar residues; the sequence is HLSSVGQNTSPADR.

This chain is Protein YcgL, found in Salmonella choleraesuis (strain SC-B67).